Reading from the N-terminus, the 118-residue chain is Small ribosomal subunit protein uS13 (118 aa).

The interval 94-118 (SLPLRGQRTKTNARTRKGPRKPIRK) is disordered.

The protein belongs to the universal ribosomal protein uS13 family. In terms of assembly, part of the 30S ribosomal subunit. Forms a loose heterodimer with protein S19. Forms two bridges to the 50S subunit in the 70S ribosome.

Functionally, located at the top of the head of the 30S subunit, it contacts several helices of the 16S rRNA. In the 70S ribosome it contacts the 23S rRNA (bridge B1a) and protein L5 of the 50S subunit (bridge B1b), connecting the 2 subunits; these bridges are implicated in subunit movement. Contacts the tRNAs in the A and P-sites. This is Small ribosomal subunit protein uS13 from Shewanella violacea (strain JCM 10179 / CIP 106290 / LMG 19151 / DSS12).